Consider the following 254-residue polypeptide: Alcohol dehydrogenase (254 aa).

10–33 (FVAGLGGIGLDTSRELVKRNLKNL) contributes to the NAD(+) binding site. Ser-138 is a substrate binding site. Tyr-151 serves as the catalytic Proton acceptor.

The protein belongs to the short-chain dehydrogenases/reductases (SDR) family. Homodimer.

The catalysed reaction is a primary alcohol + NAD(+) = an aldehyde + NADH + H(+). The enzyme catalyses a secondary alcohol + NAD(+) = a ketone + NADH + H(+). This is Alcohol dehydrogenase (Adh) from Drosophila pseudoobscura pseudoobscura (Fruit fly).